Reading from the N-terminus, the 573-residue chain is MNVEELIMKYALINAISHKGKANPKAVIGKVLGENPELRPKAKEIIPLVNQIVEQVNGMDIEEQEAKLKEIYPEFFEAKKEKKEEKKGLPPLPKAEKGKVVTRFAPNPDGAFHLGNARAAILSHEYARLYGGKFILRFDDTDPKVKRPEPKFYEWIIEDLKWLGFQIDEIHIASDRLEIYYKYAEELIKMGKAYVCTCPPEKFRELRDNGIACPHREEPVEVQLERWRKMLNGEYKEGEAVVRIKTDLKHPNPAVRDWPALRIIDNPSHPRTGDKYRVWPLYNFASAIDDHELGVTHIFRGQEHAENETRQRYIYDYFGWEYPVTVHHGRLSIEGVILSKSKTRKGIDEGKYFGWDDPRLGTIRALKRRGIRPEAIRELIIEVGLKRSDTTISWDNLAAINRRIVEPIANRYFFVADPIPMYIEGYDEEFVAEIPLHPDHPDRGVRKLKFEPGRPVYVSKDDMELFKPGSFVRLKDLFNVEILEVSEEGIKARFHSIEYEIARENRWRMVHWVTEGRACGVLIPQGDELIVRKGLLESDANVKVDDVVQFERFGFVRIDDVTPEKVVAIFAHK.

The 'HIGH' region signature appears at 106-116 (PNPDGAFHLGN).

It belongs to the class-I aminoacyl-tRNA synthetase family. Glutamate--tRNA ligase type 2 subfamily.

Its subcellular location is the cytoplasm. The catalysed reaction is tRNA(Glu) + L-glutamate + ATP = L-glutamyl-tRNA(Glu) + AMP + diphosphate. Functionally, catalyzes the attachment of glutamate to tRNA(Glu) in a two-step reaction: glutamate is first activated by ATP to form Glu-AMP and then transferred to the acceptor end of tRNA(Glu). This Thermococcus onnurineus (strain NA1) protein is Glutamate--tRNA ligase.